A 911-amino-acid chain; its full sequence is Probable dipeptidyl-aminopeptidase B (911 aa).

Residues 1 to 39 (MPRPRAAKEEETELLAQHQESPRPSSDGSEASASSISTT) form a disordered region. Residues 1–97 (MPRPRAAKEE…TPVDKKARRT (97 aa)) lie on the Cytoplasmic side of the membrane. Residues 25–39 (SSDGSEASASSISTT) are compositionally biased toward low complexity. Residues 98–118 (LWIVGTICAVGWALALVSFLM) traverse the membrane as a helical; Signal-anchor for type II membrane protein segment. Topologically, residues 119-911 (NGNYKHSSTR…AQADARSLGR (793 aa)) are vacuolar. Residues Asn268 and Asn564 are each glycosylated (N-linked (GlcNAc...) asparagine). Residue Ser755 is the Charge relay system of the active site. Asn809 carries an N-linked (GlcNAc...) asparagine glycan. Active-site charge relay system residues include Asp832 and His865.

The protein belongs to the peptidase S9B family.

Its subcellular location is the vacuole membrane. The enzyme catalyses Release of an N-terminal dipeptide, Xaa-Yaa-|-Zaa-, from a polypeptide, preferentially when Yaa is Pro, provided Zaa is neither Pro nor hydroxyproline.. Functionally, type IV dipeptidyl-peptidase which removes N-terminal dipeptides sequentially from polypeptides having unsubstituted N-termini provided that the penultimate residue is proline. The protein is Probable dipeptidyl-aminopeptidase B (DAPB) of Phaeosphaeria nodorum (strain SN15 / ATCC MYA-4574 / FGSC 10173) (Glume blotch fungus).